The chain runs to 204 residues: FMN-dependent NADH:quinone oxidoreductase 5 (204 aa).

Position 10 (Ser10) interacts with FMN.

It belongs to the azoreductase type 1 family. As to quaternary structure, homodimer. The cofactor is FMN.

It catalyses the reaction 2 a quinone + NADH + H(+) = 2 a 1,4-benzosemiquinone + NAD(+). The catalysed reaction is N,N-dimethyl-1,4-phenylenediamine + anthranilate + 2 NAD(+) = 2-(4-dimethylaminophenyl)diazenylbenzoate + 2 NADH + 2 H(+). In terms of biological role, quinone reductase that provides resistance to thiol-specific stress caused by electrophilic quinones. Also exhibits azoreductase activity. Catalyzes the reductive cleavage of the azo bond in aromatic azo compounds to the corresponding amines. This Burkholderia lata (strain ATCC 17760 / DSM 23089 / LMG 22485 / NCIMB 9086 / R18194 / 383) protein is FMN-dependent NADH:quinone oxidoreductase 5.